The sequence spans 311 residues: Olfactory receptor 10G7 (311 aa).

Residues Met-1–Ala-23 lie on the Extracellular side of the membrane. Asn-3 carries N-linked (GlcNAc...) asparagine glycosylation. A helical transmembrane segment spans residues Pro-24 to Leu-44. Topologically, residues Leu-45 to His-52 are cytoplasmic. A helical membrane pass occupies residues Leu-53–Thr-73. Residues Val-74–Ala-98 are Extracellular-facing. Cysteines 96 and 188 form a disulfide. A helical membrane pass occupies residues Gln-99–Tyr-119. At Asp-120 to Arg-138 the chain is on the cytoplasmic side. A helical membrane pass occupies residues Ser-139–Thr-159. The Extracellular segment spans residues Ile-160 to Met-196. The chain crosses the membrane as a helical span at residues Val-197–Ser-216. At Tyr-217–Ala-236 the chain is on the cytoplasmic side. A helical membrane pass occupies residues Phe-237–Ile-257. Topologically, residues Tyr-258–His-268 are extracellular. A helical transmembrane segment spans residues Gly-269 to Leu-289. Over Arg-290–Glu-311 the chain is Cytoplasmic.

This sequence belongs to the G-protein coupled receptor 1 family.

It localises to the cell membrane. Odorant receptor. This chain is Olfactory receptor 10G7 (OR10G7), found in Homo sapiens (Human).